The primary structure comprises 462 residues: Argininosuccinate lyase (462 aa).

This sequence belongs to the lyase 1 family. Argininosuccinate lyase subfamily.

It localises to the cytoplasm. The catalysed reaction is 2-(N(omega)-L-arginino)succinate = fumarate + L-arginine. Its pathway is amino-acid biosynthesis; L-arginine biosynthesis; L-arginine from L-ornithine and carbamoyl phosphate: step 3/3. The polypeptide is Argininosuccinate lyase (Streptococcus agalactiae serotype Ia (strain ATCC 27591 / A909 / CDC SS700)).